The sequence spans 396 residues: ATP-dependent RNA helicase eIF4A (396 aa).

The Q motif signature appears at 22–50 (YSFDDLNLKPNIVRGIFGYGYESPSAIQQ). The Helicase ATP-binding domain occupies 53 to 223 (ILPITEGRDV…TKFMNNPVRI (171 aa)). An ATP-binding site is contributed by 66–73 (AQSGTGKT). The DEAD box motif lies at 171–174 (DEAD). The region spanning 234–395 (GIKQFYINVE…EMPANIGELF (162 aa)) is the Helicase C-terminal domain.

This sequence belongs to the DEAD box helicase family. eIF4A subfamily. In terms of assembly, component of the eIF4F complex, which composition varies with external and internal environmental conditions. It is composed of at least eIF4A, eIF4E and eIF4G.

It is found in the cytoplasm. The enzyme catalyses ATP + H2O = ADP + phosphate + H(+). Functionally, ATP-dependent RNA helicase which is a subunit of the eIF4F complex involved in cap recognition and is required for mRNA binding to ribosome. In the current model of translation initiation, eIF4A unwinds RNA secondary structures in the 5'-UTR of mRNAs which is necessary to allow efficient binding of the small ribosomal subunit, and subsequent scanning for the initiator codon. This Meyerozyma guilliermondii (strain ATCC 6260 / CBS 566 / DSM 6381 / JCM 1539 / NBRC 10279 / NRRL Y-324) (Yeast) protein is ATP-dependent RNA helicase eIF4A (TIF1).